The sequence spans 52 residues: Large ribosomal subunit protein eL40 (52 aa).

Belongs to the eukaryotic ribosomal protein eL40 family.

This chain is Large ribosomal subunit protein eL40, found in Thermococcus onnurineus (strain NA1).